The sequence spans 74 residues: Tetrahydromethanopterin S-methyltransferase subunit G (74 aa).

The chain crosses the membrane as a helical span at residues valine 47–leucine 67.

It belongs to the MtrG family. The complex is composed of 8 subunits; MtrA, MtrB, MtrC, MtrD, MtrE, MtrF, MtrG and MtrH.

It localises to the cell membrane. It carries out the reaction 5-methyl-5,6,7,8-tetrahydromethanopterin + coenzyme M + 2 Na(+)(in) = 5,6,7,8-tetrahydromethanopterin + methyl-coenzyme M + 2 Na(+)(out). Its pathway is one-carbon metabolism; methanogenesis from CO(2); methyl-coenzyme M from 5,10-methylene-5,6,7,8-tetrahydromethanopterin: step 2/2. In terms of biological role, part of a complex that catalyzes the formation of methyl-coenzyme M and tetrahydromethanopterin from coenzyme M and methyl-tetrahydromethanopterin. This is an energy-conserving, sodium-ion translocating step. The protein is Tetrahydromethanopterin S-methyltransferase subunit G of Methanococcus maripaludis (strain DSM 14266 / JCM 13030 / NBRC 101832 / S2 / LL).